The following is a 180-amino-acid chain: Insulin-like growth factor 2 (180 aa).

Positions 1-24 (MGIPVGKSMLVLLISLAFALCCIA) are cleaved as a signal peptide. The b stretch occupies residues 25 to 52 (AYGPGETLCGGELVDTLQFVCSDRGFYF). Disulfide bonds link Cys33–Cys71, Cys45–Cys84, and Cys70–Cys75. Residues 53 to 64 (SRPSSRANRRSR) are c. Residues 65–85 (GIVEECCFRSCDLALLETYCA) are a. The tract at residues 86 to 91 (TPAKSE) is d. The propeptide at 92–180 (RDVSTSQAVL…ASSEMSSNHQ (89 aa)) is e peptide. The interval 157-180 (PLIVLPPKDPAHGGASSEMSSNHQ) is disordered.

Belongs to the insulin family. Interacts with MYORG; this interaction is required for IGF2 secretion. Interacts with integrins ITGAV:ITGB3 and ITGA6:ITGB4; integrin-binding is required for IGF2 signaling. Interacts with IGFBP2. Post-translationally, proteolytically processed by PCSK4, proIGF2 is cleaved at Arg-128 and Arg-92 to generate big-IGF2 and mature IGF2. As to expression, expressed in the heart, blood serum, kidney and skeletal muscle including the tibialis anterior muscle.

The protein resides in the secreted. The insulin-like growth factors possess growth-promoting activity. Major fetal growth hormone in mammals. Plays a key role in regulating fetoplacental development. IGF2 is influenced by placental lactogen. Also involved in tissue differentiation. In adults, involved in glucose metabolism in adipose tissue, skeletal muscle and liver. Acts as a ligand for integrin which is required for IGF2 signaling. Positively regulates myogenic transcription factor MYOD1 function by facilitating the recruitment of transcriptional coactivators, thereby controlling muscle terminal differentiation. Inhibits myoblast differentiation and modulates metabolism via increasing the mitochondrial respiration rate. Its function is as follows. Preptin undergoes glucose-mediated co-secretion with insulin, and acts as a physiological amplifier of glucose-mediated insulin secretion. Exhibits osteogenic properties by increasing osteoblast mitogenic activity through phosphoactivation of MAPK1 and MAPK3. This Mus musculus (Mouse) protein is Insulin-like growth factor 2.